The chain runs to 373 residues: Valienol-1-phosphate guanylyltransferase (373 aa).

Substrate contacts are provided by residues G177 and 192-193; that span reads EK.

This sequence belongs to the bacterial/plant glucose-1-phosphate adenylyltransferase family. Requires Mg(2+) as cofactor.

The enzyme catalyses valienol 1-phosphate + GTP + H(+) = GDP-valienol + diphosphate. Functionally, involved in the biosynthesis of the antifungal agent validamycin A. Catalyzes the conversion of valienol 1-phosphate to GDP-valienol and less effectively to ADP-valienol or other NDP derivatives. The chain is Valienol-1-phosphate guanylyltransferase from Streptomyces hygroscopicus subsp. limoneus.